The sequence spans 350 residues: DNA polymerase delta subunit 3 (350 aa).

The tract at residues 131–350 is disordered; it reads EEKSKPLVRP…LESFFKRKAK (220 aa). 2 stretches are compositionally biased toward basic and acidic residues: residues 146 to 162 and 172 to 195; these read TTPE…KDMG and MKKD…EENL. A Phosphothreonine modification is found at Thr223. Residue Ser230 is modified to Phosphoserine. Over residues 234 to 248 the composition is skewed to basic and acidic residues; that stretch reads SPKETDSNDKDKNND. Positions 249-262 are enriched in acidic residues; that stretch reads DLEDLLETTAEDSL. Residues 274 to 286 are compositionally biased toward basic and acidic residues; it reads SETEHSKEPKSEE. Polar residues predominate over residues 320-332; the sequence is LSSSKKQETPSSN.

In terms of assembly, DNA polymerase delta is a heterotrimer of POL3, POL32 and HYS2. POL32 can form homodimers.

The protein localises to the nucleus. DNA polymerase delta (DNA polymerase III) participates in chromosomal DNA replication. It is required during synthesis of the leading and lagging DNA strands at the replication fork and binds at/or near replication origins and moves along DNA with the replication fork. It has 3'-5' proofreading exonuclease activity that correct errors arising during DNA replication. It is also involved in DNA synthesis during DNA repair. The protein is DNA polymerase delta subunit 3 (POL32) of Saccharomyces cerevisiae (strain ATCC 204508 / S288c) (Baker's yeast).